A 513-amino-acid chain; its full sequence is Lysine--tRNA ligase (513 aa).

Polar residues predominate over residues 1 to 11 (MTEPTQPNAAQ). Residues 1–22 (MTEPTQPNAAQPNVVPEVDDNK) form a disordered region. Residues E423 and E430 each contribute to the Mg(2+) site.

This sequence belongs to the class-II aminoacyl-tRNA synthetase family. In terms of assembly, homodimer. Mg(2+) serves as cofactor.

The protein resides in the cytoplasm. The catalysed reaction is tRNA(Lys) + L-lysine + ATP = L-lysyl-tRNA(Lys) + AMP + diphosphate. The sequence is that of Lysine--tRNA ligase from Paraburkholderia xenovorans (strain LB400).